A 288-amino-acid chain; its full sequence is Putative transcription factor kapC (288 aa).

Residues 1 to 10 (MQPTLAPAPH) show a composition bias toward pro residues. The segment at 1–121 (MQPTLAPAPH…AAQRAFRQRK (121 aa)) is disordered. The span at 26–41 (HDQLLAAHQHLSHPQQ) shows a compositional bias: low complexity. The segment covering 42 to 54 (ARPPPPPPQPPHM) has biased composition (pro residues). The span at 84–93 (QPDLSGQESP) shows a compositional bias: polar residues. A bZIP domain is found at 100-163 (PLSTSKRAAQ…EYIINLQSRL (64 aa)). The segment at 101 to 124 (LSTSKRAAQNRAAQRAFRQRKEAH) is basic motif. A compositionally biased stretch (low complexity) spans 106-116 (RAAQNRAAQRA). The segment at 128–159 (LEGKVKAYETMGEAIKALQAENYQLREYIINL) is leucine-zipper. Disordered regions lie at residues 172 to 226 (ELPG…NDDM) and 242 to 288 (PPTE…PLIS). Pro residues predominate over residues 202–212 (PVPPPTAPQQP). Over residues 213-222 (QPAQNQASAP) the composition is skewed to low complexity.

The protein belongs to the bZIP family.

It is found in the nucleus. In terms of biological role, putative transcription factor. The chain is Putative transcription factor kapC (kapC) from Aspergillus clavatus (strain ATCC 1007 / CBS 513.65 / DSM 816 / NCTC 3887 / NRRL 1 / QM 1276 / 107).